The chain runs to 395 residues: Pyruvate synthase subunit PorA (395 aa).

Heterotetramer of one alpha, one beta, one delta and one gamma chain.

The enzyme catalyses 2 oxidized [2Fe-2S]-[ferredoxin] + pyruvate + CoA = 2 reduced [2Fe-2S]-[ferredoxin] + acetyl-CoA + CO2 + H(+). This is Pyruvate synthase subunit PorA (porA) from Pyrococcus abyssi (strain GE5 / Orsay).